A 359-amino-acid chain; its full sequence is Peptide chain release factor 1 (359 aa).

An N5-methylglutamine modification is found at Gln232.

This sequence belongs to the prokaryotic/mitochondrial release factor family. In terms of processing, methylated by PrmC. Methylation increases the termination efficiency of RF1.

It localises to the cytoplasm. In terms of biological role, peptide chain release factor 1 directs the termination of translation in response to the peptide chain termination codons UAG and UAA. In Lawsonia intracellularis (strain PHE/MN1-00), this protein is Peptide chain release factor 1.